Here is a 219-residue protein sequence, read N- to C-terminus: Transmembrane emp24 domain-containing protein 10 (219 aa).

The signal sequence occupies residues 1 to 31 (MSGSSGPQAQRGPCPFALLLLLLLGPSSVLA). Residues 1 to 142 (MSGSSGPQAQ…KNYEEIAKVE (142 aa)) are required for interaction with STX17. Residues 32 to 185 (ISFHLPVNSR…RDTNESTNTR (154 aa)) lie on the Lumenal side of the membrane. Residues 41–193 (RKCLREEIHK…TRVLYFSIFS (153 aa)) enclose the GOLD domain. Residues 147–178 (LEVELRRLEDLSESIVNDFAYMKKREEEMRDT) are required for TMED10 and TMED2 cis-Golgi network localization. Dimethylated arginine is present on residues Arg-171 and Arg-176. Asn-179 carries N-linked (GlcNAc...) asparagine glycosylation. The helical transmembrane segment at 186 to 206 (VLYFSIFSMFCLIGLATWQVF) threads the bilayer. The interaction with COPG1 stretch occupies residues 204–219 (QVFYLRRFFKAKKLIE). Topologically, residues 207–219 (YLRRFFKAKKLIE) are cytoplasmic. The segment at 207–219 (YLRRFFKAKKLIE) is interaction with ARF1 and IL1B. Residues 211 to 212 (FF) carry the COPII vesicle coat-binding motif. A COPI vesicle coat-binding motif is present at residues 211-219 (FFKAKKLIE).

The protein belongs to the EMP24/GP25L family. In terms of assembly, predominantly dimeric and to a lesser extent monomeric in the ER. Monomer and dimer in ERGIC and cis-Golgi network. Forms homooligomer (via GOLD domain); the assembly is promoted by direct binding with leaderless cargos and may form a protein channel that facilitates cargo entry into the ERGIC. Forms heterooligomeric complexes with other members of the p24 family such as TMED2, TMED7 and TMED9. Interacts (via GOLD domain) with TMED2 (via GOLD domain); the complex is required for export of TMED10 from the ER to the cis-Golgi network; the complex is proposed to be involved in cis-Golgi network dynamics and / or biogenesis. Associates with the COPI vesicle coat subunits (coatomer). Tetramerization of the cytoplasmic domain at the Golgi membrane in vitro; the complex is proposed to interact with COPI coatomer and induce budding of the vesicles. Interacts with COPG1; the interaction involves TMED10 homodimer. Interacts with ARF1 (GDP-bound); the interaction probably involves a TMED10 oligomer. Interacts with SEC23A, SEC24B, SEC24C and SEC24D components of the coat protein complex II/COPII, indicative of an association of TMED10 with the COPII vesicle coat. Interacts with CD59. Interacts with MPPE1/PGAP5; the complex might recruit and sort GPI-anchored proteins to the ER-exit site, or the interaction might lead to recycling of PGAP5 between the ER and the Golgi. Interacts with F2LR1/PAR2. Interacts with KDELR2/ERD2; the interaction is disrupted by KDELR2 ligand. Found in a complex composed at least of SURF4, TMED2 and TMED10. Associates with the presenilin-dependent gamma-secretase complex. Interacts with STX17; the interaction is direct. Interacts with IL-1; the interaction is direct. Interacts with RAB21 (active GTP-bound form); the interaction is indirect and regulates TMED10 abundance and localization at the Golgi.

It is found in the endoplasmic reticulum membrane. The protein resides in the endoplasmic reticulum-Golgi intermediate compartment membrane. It localises to the golgi apparatus membrane. The protein localises to the golgi apparatus. Its subcellular location is the cis-Golgi network membrane. It is found in the trans-Golgi network membrane. The protein resides in the cytoplasmic vesicle. It localises to the secretory vesicle membrane. The protein localises to the cell membrane. Its subcellular location is the melanosome. Cargo receptor involved in protein vesicular trafficking and quality control in the endoplasmic reticulum (ER) and Golgi. The p24 protein family is a group of transmembrane proteins that bind coat protein complex I/COPI and coat protein complex II/COPII involved in vesicular trafficking between the membranes. Acts at the lumenal side for incorporation of secretory cargo molecules into transport vesicles and involved in vesicle coat formation at the cytoplasmic side. Mainly functions in the early secretory pathway and cycles between the ER, ER-Golgi intermediate compartment (ERGIC) and Golgi, mediating cargo transport through COPI and COPII-coated vesicles. In COPII vesicle-mediated anterograde transport, involved in the transport of GPI-anchored proteins by acting together with TMED2 as their cargo receptor; the function specifically implies SEC24C and SEC24D of the COPII vesicle coat and lipid raft-like microdomains of the ER. Recognizes GPI anchors structural remodeled in the ER by the GPI inositol-deacylase/PGAP1 and the metallophosphoesterase MPPE1/PGAP5. In COPI vesicle-mediated retrograde transport, involved in the biogenesis of COPI vesicles and vesicle coat recruitment. Involved in trafficking of amyloid beta A4 protein and soluble APP-beta release (independent from the modulation of gamma-secretase activity). Involved in the KDELR2-mediated retrograde transport of the toxin A subunit (CTX-A-K63)together with COPI and the COOH terminus of KDELR2. On Golgi membranes, acts as a primary receptor for ARF1-GDP, a GTP-binding protein involved in COPI-vesicle formation. Increases coatomer-dependent GTPase-activating activity of ARFGAP2 which mediates the hydrolysis of ARF1-bound GTP and therefore modulates protein trafficking from the Golgi apparatus. Involved in the exocytic trafficking of G protein-coupled receptors F2LR1/PAR2 (trypsin and tryspin-like enzyme receptor), OPRM1 (opioid receptor) and P2RY4 (UTD and UDP receptor) from the Golgi to the plasma membrane, thus contributing to receptor resensitization. In addition to its cargo receptor activity, may also act as a protein channel after oligomerization, facilitating the post-translational entry of leaderless cytoplasmic cargo into the ERGIC. Involved in the translocation into ERGIC, the vesicle entry and the secretion of leaderless cargos (lacking the secretion signal sequence), including the mature form of interleukin 1/IL-1 family members, the alpha-crystallin B chain HSPB5, the carbohydrate-binding proteins galectin-1/LGALS1 and galectin-3/LGALS3, the microtubule-associated protein Tau/MAPT, and the annexin A1/ANXA1; the translocation process is dependent on cargo protein unfolding and enhanced by chaperones HSP90AB1 and HSP90B1/GRP9. Could also associates with the presenilin-dependent gamma-secretase complex in order to regulate gamma-cleavages of the amyloid beta A4 protein to yield amyloid-beta 40/Abeta40. This Bos taurus (Bovine) protein is Transmembrane emp24 domain-containing protein 10 (TMED10).